The sequence spans 572 residues: MPTLYVILSLLLGLIGGVLVQRAIGSRQQAVTDDRLQREAQAEAQQIRAEAQRHARELHEAAEQDRQDAISKTQDAARRVQDAAERDTLAAAHEARLDEQREQVRALRAQLEAEREQAKADAAQQREALSTDRQETRREREDLGREIERLGRRTEQLDARSDKLDALEERLEGGWREVQRQEQEVAERLRQADLKLYEVAGLTPEVAREQILGRLNAELEEEKAIRVKAMTEKAGAEARRSARSIIAQAIQRSASETSAQLSVSVVPIPSDAMKGRLIGREGRNIRAFESLTGVDLIIDDTPEAVILSSFNPLRREVARHVLDALVADGRIHPTRIEEMVHKAQDDMKTFIHQQGEEAAIEAGVVGLKPGLVQLLGRMYFRTSYSQNVLKHSVQVAHLTGIMADELGLDAALARRAGLMHDVGKSIDREIEGTHVEIGINLARRFGEPAEVIDAIAHHHDPENGETLYSVLVAAADAISAARPGARREALESYVRRLEQLEQIAVAFPGVQQAYAIQAGREVRVIVQPEKVTDAQATLLARDIAGRVEQDMEYPGQVQVTVVRESRAVGVAR.

A helical membrane pass occupies residues M1–Q21. Disordered regions lie at residues H59–E85 and Q110–D142. Basic and acidic residues-rich tracts occupy residues Q110–K119 and L129–D142. Positions S262–L322 constitute a KH domain. In terms of domain architecture, HD spans V388 to A481.

The protein belongs to the RNase Y family.

It localises to the cell membrane. Endoribonuclease that initiates mRNA decay. The chain is Ribonuclease Y from Deinococcus radiodurans (strain ATCC 13939 / DSM 20539 / JCM 16871 / CCUG 27074 / LMG 4051 / NBRC 15346 / NCIMB 9279 / VKM B-1422 / R1).